A 571-amino-acid polypeptide reads, in one-letter code: Glutamate--tRNA ligase (571 aa).

Residues 110–120 carry the 'HIGH' region motif; that stretch reads PNPNGPATLGS.

The protein belongs to the class-I aminoacyl-tRNA synthetase family. Glutamate--tRNA ligase type 2 subfamily.

It localises to the cytoplasm. The catalysed reaction is tRNA(Glu) + L-glutamate + ATP = L-glutamyl-tRNA(Glu) + AMP + diphosphate. In terms of biological role, catalyzes the attachment of glutamate to tRNA(Glu) in a two-step reaction: glutamate is first activated by ATP to form Glu-AMP and then transferred to the acceptor end of tRNA(Glu). This chain is Glutamate--tRNA ligase, found in Methanosarcina mazei (strain ATCC BAA-159 / DSM 3647 / Goe1 / Go1 / JCM 11833 / OCM 88) (Methanosarcina frisia).